Consider the following 89-residue polypeptide: MSLISIVCLIPFGLIGAVNPIITLSAYAVLGGMYLFVVPLFLFYWMNNRWNVMGKFERLFIYGLVFLFFPGMVLFAPFLNLRMNGKEES.

The next 2 helical transmembrane spans lie at 29 to 46 (VLGG…FYWM) and 59 to 79 (LFIY…APFL).

The protein belongs to the complex I NdhL subunit family. In terms of assembly, NDH-1 can be composed of about 15 different subunits; different subcomplexes with different compositions have been identified which probably have different functions.

It localises to the cellular thylakoid membrane. It catalyses the reaction a plastoquinone + NADH + (n+1) H(+)(in) = a plastoquinol + NAD(+) + n H(+)(out). The enzyme catalyses a plastoquinone + NADPH + (n+1) H(+)(in) = a plastoquinol + NADP(+) + n H(+)(out). Its function is as follows. NDH-1 shuttles electrons from an unknown electron donor, via FMN and iron-sulfur (Fe-S) centers, to quinones in the respiratory and/or the photosynthetic chain. The immediate electron acceptor for the enzyme in this species is believed to be plastoquinone. Couples the redox reaction to proton translocation, and thus conserves the redox energy in a proton gradient. Cyanobacterial NDH-1 also plays a role in inorganic carbon-concentration. This chain is NAD(P)H-quinone oxidoreductase subunit L, found in Prochlorococcus marinus (strain NATL1A).